Reading from the N-terminus, the 89-residue chain is Defensin-like protein 250 (89 aa).

The signal sequence occupies residues 1 to 23 (MKLAAIFLVSCVLLSLLPSLTIA). 4 disulfide bridges follow: Cys29-Cys86, Cys40-Cys69, Cys48-Cys79, and Cys67-Cys81.

The protein belongs to the DEFL family.

The protein localises to the secreted. The polypeptide is Defensin-like protein 250 (SCRL8) (Arabidopsis thaliana (Mouse-ear cress)).